The sequence spans 395 residues: Putative transport protein sll0063 (395 aa).

The next 8 helical transmembrane spans lie at 24 to 44, 50 to 70, 91 to 111, 180 to 200, 245 to 265, 269 to 289, 295 to 315, and 328 to 348; these read LNAI…VLNA, IFGY…IAFL, FVFL…IPLA, VFTV…FYLL, ALGL…LFGL, VMAL…FLVA, MALQ…NGIA, and FWVL…GVIV.

The protein belongs to the autoinducer-2 exporter (AI-2E) (TC 2.A.86) family.

It localises to the cell membrane. The chain is Putative transport protein sll0063 from Synechocystis sp. (strain ATCC 27184 / PCC 6803 / Kazusa).